We begin with the raw amino-acid sequence, 164 residues long: Small ribosomal subunit protein uS5 (164 aa).

Positions 10 to 73 (IEERVVAINR…ESAKKNMIEV (64 aa)) constitute an S5 DRBM domain.

It belongs to the universal ribosomal protein uS5 family. In terms of assembly, part of the 30S ribosomal subunit. Contacts proteins S4 and S8.

Its function is as follows. With S4 and S12 plays an important role in translational accuracy. Functionally, located at the back of the 30S subunit body where it stabilizes the conformation of the head with respect to the body. The protein is Small ribosomal subunit protein uS5 of Streptococcus suis (strain 98HAH33).